The following is a 657-amino-acid chain: MTVLDTVTISTCGLAALIREAPDTTLVVDCRGFTEYNESHVRHSMNAFFSKLIRRRLFENKLDDNCLIHQLMSCSSGCTKMDEKLDLVLYAEEDKPRGNKRRIASCNAPESTAKIMRVLRERLEDTDKFRSVMVLEGGFKQFAQQYPQLCESSEGMTRLPQSLSQPCLSQPTGDGITLITPNIYLGSQIDSLDETMLDALDISVVINLSMTCPKSVCIKEDKNFMRIPVNDSYQEKLSPYFPMAYEFLEKCRRAGKKCLIHCLAGISRSPTLAISYIMRYMKMGSDDAYRYVKERRPSISPNFNFMGQLLEYENVLIKDHVLDYNQASRPHRHMDYYGPSDLCPPKVPKSASSNCVFPGSTHDESSPSSPSVSEGSAASEPETSSSAASSSSTASAPPSMPSTSEQGTSSGTVNVNGKRNMTMDLGLPHRPKALGLPSRIGTSVAELPSPSTELSRLSFNGPEAIAPSTPILNFTNPCFNSPIIPVASSSREVILTLPTPAASSSSSTSSEPSFDFSSFESSSSSSIVVENPFFASTEVPAGSSSISTPSGSQSTPASASSSAASRCRMKGFFKVFSKKAPASTSTPASSTPGTSRAARPECLRSSGIIISAPVLAITEEEDAESPESGFNEPEVGEEDDDSVSICSTSSLEIPCHQ.

Residues 21 to 151 (APDTTLVVDC…FAQQYPQLCE (131 aa)) form the Rhodanese domain. Residues 175–318 (GITLITPNIY…LLEYENVLIK (144 aa)) form the Tyrosine-protein phosphatase domain. The Phosphocysteine intermediate role is filled by Cys262. Disordered stretches follow at residues 353 to 426 (SNCV…MDLG), 539 to 563 (VPAG…SSSA), and 581 to 657 (PAST…PCHQ). A compositionally biased stretch (low complexity) spans 366–405 (SPSSPSVSEGSAASEPETSSSAASSSSTASAPPSMPSTSE). Residues 406 to 419 (QGTSSGTVNVNGKR) are compositionally biased toward polar residues. 2 stretches are compositionally biased toward low complexity: residues 542 to 563 (GSSS…SSSA) and 581 to 597 (PAST…TSRA).

The protein belongs to the protein-tyrosine phosphatase family. Non-receptor class dual specificity subfamily. In terms of assembly, may interact with pmk-3. Expressed in the pharynx, intestine, neurons and vulval hypodermal cells.

It carries out the reaction O-phospho-L-tyrosyl-[protein] + H2O = L-tyrosyl-[protein] + phosphate. Acts preferentially on the c-Jun N-terminal kinase (JNK) and p38 MAPKs. Plays an important role in the heavy metal stress response and in axon regeneration by negatively regulating the kgb-1 (JNK-like) and the pmk-1 (p38-type) MAPK signaling pathways. This Caenorhabditis elegans protein is Tyrosine-protein phosphatase vhp-1 (vhp-1).